A 420-amino-acid polypeptide reads, in one-letter code: Putative U-box domain-containing protein 58 (420 aa).

The 165-residue stretch at 4-168 (NSYVLFARLC…EDALAMKKED (165 aa)) folds into the MIF4G domain. The stretch at 139–352 (SRVVELEGNY…TAKEQMEKRQ (214 aa)) forms a coiled coil. The region spanning 352-420 (QPPSSFFCPI…ALRSAIEELV (69 aa)) is the U-box domain.

The catalysed reaction is S-ubiquitinyl-[E2 ubiquitin-conjugating enzyme]-L-cysteine + [acceptor protein]-L-lysine = [E2 ubiquitin-conjugating enzyme]-L-cysteine + N(6)-ubiquitinyl-[acceptor protein]-L-lysine.. Its pathway is protein modification; protein ubiquitination. In terms of biological role, functions as an E3 ubiquitin ligase. The polypeptide is Putative U-box domain-containing protein 58 (PUB58) (Arabidopsis thaliana (Mouse-ear cress)).